A 125-amino-acid polypeptide reads, in one-letter code: Flagellar protein FliT (125 aa).

The segment at 1 to 50 is required for homodimerization; sequence MDNKMDLLSAYQRILSLSEQMLNLAKNEKWDELVDMEITYLKAVEVISHS. A fliD binding region spans residues 60–98; that stretch reads LQQKMTNILQIILDNENEIKKLLQKRLDELSKLIKQASQ.

This sequence belongs to the FliT family. In terms of assembly, homodimer. Interacts with FliD and FlhC.

It is found in the cytoplasm. The protein resides in the cytosol. Its function is as follows. Dual-function protein that regulates the transcription of class 2 flagellar operons and that also acts as an export chaperone for the filament-capping protein FliD. As a transcriptional regulator, acts as an anti-FlhDC factor; it directly binds FlhC, thus inhibiting the binding of the FlhC/FlhD complex to class 2 promoters, resulting in decreased expression of class 2 flagellar operons. As a chaperone, effects FliD transition to the membrane by preventing its premature polymerization, and by directing it to the export apparatus. This chain is Flagellar protein FliT, found in Photorhabdus laumondii subsp. laumondii (strain DSM 15139 / CIP 105565 / TT01) (Photorhabdus luminescens subsp. laumondii).